The following is a 599-amino-acid chain: Elongation factor 4 (599 aa).

In terms of domain architecture, tr-type G spans 5–187 (SHIRNFSIIA…RLVTVIPAPE (183 aa)). GTP-binding positions include 17–22 (DHGKST) and 134–137 (NKMD).

This sequence belongs to the TRAFAC class translation factor GTPase superfamily. Classic translation factor GTPase family. LepA subfamily.

It is found in the cell inner membrane. The enzyme catalyses GTP + H2O = GDP + phosphate + H(+). Its function is as follows. Required for accurate and efficient protein synthesis under certain stress conditions. May act as a fidelity factor of the translation reaction, by catalyzing a one-codon backward translocation of tRNAs on improperly translocated ribosomes. Back-translocation proceeds from a post-translocation (POST) complex to a pre-translocation (PRE) complex, thus giving elongation factor G a second chance to translocate the tRNAs correctly. Binds to ribosomes in a GTP-dependent manner. The polypeptide is Elongation factor 4 (Pseudomonas paraeruginosa (strain DSM 24068 / PA7) (Pseudomonas aeruginosa (strain PA7))).